The primary structure comprises 211 residues: Ribosomal RNA large subunit methyltransferase E (211 aa).

S-adenosyl-L-methionine-binding residues include G60, W62, D85, D101, and D126. K166 acts as the Proton acceptor in catalysis.

Belongs to the class I-like SAM-binding methyltransferase superfamily. RNA methyltransferase RlmE family.

It is found in the cytoplasm. The enzyme catalyses uridine(2552) in 23S rRNA + S-adenosyl-L-methionine = 2'-O-methyluridine(2552) in 23S rRNA + S-adenosyl-L-homocysteine + H(+). In terms of biological role, specifically methylates the uridine in position 2552 of 23S rRNA at the 2'-O position of the ribose in the fully assembled 50S ribosomal subunit. This Bordetella petrii (strain ATCC BAA-461 / DSM 12804 / CCUG 43448) protein is Ribosomal RNA large subunit methyltransferase E.